The chain runs to 312 residues: tRNA pseudouridine synthase B (312 aa).

The active-site Nucleophile is Asp37.

The protein belongs to the pseudouridine synthase TruB family. Type 1 subfamily.

The enzyme catalyses uridine(55) in tRNA = pseudouridine(55) in tRNA. Functionally, responsible for synthesis of pseudouridine from uracil-55 in the psi GC loop of transfer RNAs. This is tRNA pseudouridine synthase B from Thermus thermophilus (strain ATCC BAA-163 / DSM 7039 / HB27).